Consider the following 97-residue polypeptide: Signal recognition particle 19 kDa protein (97 aa).

This sequence belongs to the SRP19 family. As to quaternary structure, part of the signal recognition particle protein translocation system, which is composed of SRP and FtsY. Archaeal SRP consists of a 7S RNA molecule of 300 nucleotides and two protein subunits: SRP54 and SRP19.

Its subcellular location is the cytoplasm. Functionally, involved in targeting and insertion of nascent membrane proteins into the cytoplasmic membrane. Binds directly to 7S RNA and mediates binding of the 54 kDa subunit of the SRP. The polypeptide is Signal recognition particle 19 kDa protein (Methanocella arvoryzae (strain DSM 22066 / NBRC 105507 / MRE50)).